The chain runs to 493 residues: Amphoterin-induced protein 1 (493 aa).

The signal sequence occupies residues 1–27 (MQPQRDLRGLWLLLLSLFLLLFEVARA). Positions 28 to 61 (GRPVVSCPANCLCASNILSCSKQQLPNVPQSLPG) constitute an LRRNT domain. Residues 28–372 (GRPVVSCPAN…LHGHHDTLNT (345 aa)) are Extracellular-facing. 2 cysteine pairs are disulfide-bonded: C34/C40 and C38/C47. LRR repeat units follow at residues 62 to 83 (YTAL…WTPT), 87 to 108 (NLHS…AFVP), 111 to 132 (NLRY…LFSG), 135 to 156 (ALEV…AFED), 159 to 179 (QLQK…ELIK), and 186 to 206 (KLTL…TDLQ). Residue N72 is glycosylated (N-linked (GlcNAc...) asparagine). Residues 221–272 (NPLECDCKLYQLFSHWQYRQLSSVMDFQEDLYCVHSKKLHNVFSLDFFNCSE) form the LRRCT domain. 3 disulfide bridges follow: C225–C253, C227–C270, and C290–C341. N-linked (GlcNAc...) asparagine glycosylation is found at N269, N315, N349, and N360. One can recognise an Ig-like C2-type domain in the interval 269 to 353 (NCSEYKESAW…MGETFNETLS (85 aa)). A helical membrane pass occupies residues 373–393 (AYTTLVGCILSVVLVLIYLYL). The Cytoplasmic portion of the chain corresponds to 394–493 (TPCRCWCRGV…SVFSDTPIVV (100 aa)). The segment at 405–493 (KPSSHQGDSL…SVFSDTPIVV (89 aa)) is disordered. Over residues 408–424 (SHQGDSLSSSMLSTTPN) the composition is skewed to polar residues. A compositionally biased stretch (basic and acidic residues) spans 431 to 442 (GDKDDGFDRRVA). Residues S477 and S481 each carry the phosphoserine modification.

This sequence belongs to the immunoglobulin superfamily. AMIGO family. In terms of assembly, homodimer, and heterodimer with AMIGO2 and AMIGO3. Interacts with KCNB1.

It localises to the cell membrane. The protein resides in the perikaryon. Its subcellular location is the cell projection. It is found in the dendrite. The protein localises to the axon. Its function is as follows. Promotes growth and fasciculation of neurites from cultured hippocampal neurons. May be involved in fasciculation as well as myelination of developing neural axons. May have a role in regeneration as well as neural plasticity in the adult nervous system. May mediate homophilic as well as heterophilic cell-cell interaction and contribute to signal transduction through its intracellular domain. Assembled with KCNB1 modulates the gating characteristics of the delayed rectifier voltage-dependent potassium channel KCNB1. The chain is Amphoterin-induced protein 1 from Rattus norvegicus (Rat).